The primary structure comprises 230 residues: Uracil phosphoribosyltransferase (230 aa).

38-42 (KGLVK) contacts GTP. 5-phospho-alpha-D-ribose 1-diphosphate contacts are provided by residues Arg87, Arg112, and 140 to 148 (DPMIATGST). Uracil-binding positions include Ile204 and 209–211 (GDA). A 5-phospho-alpha-D-ribose 1-diphosphate-binding site is contributed by Asp210.

The protein belongs to the UPRTase family. It depends on Mg(2+) as a cofactor.

It carries out the reaction UMP + diphosphate = 5-phospho-alpha-D-ribose 1-diphosphate + uracil. Its pathway is pyrimidine metabolism; UMP biosynthesis via salvage pathway; UMP from uracil: step 1/1. Its activity is regulated as follows. Allosterically activated by GTP. Functionally, catalyzes the conversion of uracil and 5-phospho-alpha-D-ribose 1-diphosphate (PRPP) to UMP and diphosphate. The polypeptide is Uracil phosphoribosyltransferase (Thermococcus kodakarensis (strain ATCC BAA-918 / JCM 12380 / KOD1) (Pyrococcus kodakaraensis (strain KOD1))).